A 137-amino-acid chain; its full sequence is L-ectoine synthase (137 aa).

Positions 115–137 (EVHDESGAYPADPELAREPVAAD) are disordered.

The protein belongs to the ectoine synthase family.

It carries out the reaction (2S)-4-acetamido-2-aminobutanoate = L-ectoine + H2O. It functions in the pathway amine and polyamine biosynthesis; ectoine biosynthesis; L-ectoine from L-aspartate 4-semialdehyde: step 3/3. Catalyzes the circularization of gamma-N-acetyl-alpha,gamma-diaminobutyric acid (ADABA) to ectoine (1,4,5,6-tetrahydro-2-methyl-4-pyrimidine carboxylic acid), which is an excellent osmoprotectant. The polypeptide is L-ectoine synthase (Sphingopyxis alaskensis (strain DSM 13593 / LMG 18877 / RB2256) (Sphingomonas alaskensis)).